Reading from the N-terminus, the 381-residue chain is Protein-glutamate methylesterase/protein-glutamine glutaminase (381 aa).

The 118-residue stretch at 8-125 (QVLCIDDSAL…RDGMNEYADQ (118 aa)) folds into the Response regulatory domain. A 4-aspartylphosphate modification is found at D59. The region spanning 183 to 375 (FSSTEKLIIV…PHVLARLSAH (193 aa)) is the CheB-type methylesterase domain. Residues S195, H221, and D317 contribute to the active site.

This sequence belongs to the CheB family. In terms of processing, phosphorylated by CheA. Phosphorylation of the N-terminal regulatory domain activates the methylesterase activity.

It localises to the cytoplasm. The catalysed reaction is [protein]-L-glutamate 5-O-methyl ester + H2O = L-glutamyl-[protein] + methanol + H(+). It carries out the reaction L-glutaminyl-[protein] + H2O = L-glutamyl-[protein] + NH4(+). Functionally, involved in chemotaxis. Part of a chemotaxis signal transduction system that modulates chemotaxis in response to various stimuli. Catalyzes the demethylation of specific methylglutamate residues introduced into the chemoreceptors (methyl-accepting chemotaxis proteins or MCP) by CheR. Also mediates the irreversible deamidation of specific glutamine residues to glutamic acid. This chain is Protein-glutamate methylesterase/protein-glutamine glutaminase, found in Ralstonia nicotianae (strain ATCC BAA-1114 / GMI1000) (Ralstonia solanacearum).